A 358-amino-acid polypeptide reads, in one-letter code: Dynein axonemal assembly factor 10 (358 aa).

WD repeat units follow at residues 64 to 106 (EKSK…SPVY), 116 to 155 (NAID…TPVV), 163 to 206 (ETKR…LRWE), 208 to 250 (NIRN…PSKG), 258 to 298 (AHKS…QRSK), and 320 to 358 (LSTQ…LNTV).

Interacts with PIH1D1; the interaction associates DNAAF10 with the R2TP complex. Interacts with several dynein axonemal assembly factors.

The protein resides in the dynein axonemal particle. In terms of biological role, key assembly factor specifically required for the stability of axonemal dynein heavy chains in cytoplasm. The chain is Dynein axonemal assembly factor 10 (dnaaf10) from Danio rerio (Zebrafish).